The following is a 320-amino-acid chain: MNDMGEVQREKVAVIIGPTAVGKTKLSIDLAKALNGEIISGDSMQIYRTMDIGTAKVTKEEMDGIPHYMVDIKNPEESFSVAEFQERVRKHIREITERGKLPIIVGGTGLYIQSVLFDYQFTDDAGDAIYREQMEKLALERGVEYVHKKLQEVDPESAERIHANNVRRVIRALEIFHTSGEKMSDQLEKQENELLYDVSLIGLTMDREMLYDRINLRVDIMMDQGLLEEVEGLYNRGIRDCQSIQAIGYKEIYDYFEDRVSLEEAVSQLKTNSRRYAKRQLTWFRNKMDVTWFDVTDGEKTSEILRYIEGKLQLKSNNSK.

Residue 17–24 (GPTAVGKT) coordinates ATP. A substrate-binding site is contributed by 19-24 (TAVGKT). The tract at residues 42-45 (DSMQ) is interaction with substrate tRNA.

This sequence belongs to the IPP transferase family. Monomer. Mg(2+) serves as cofactor.

The catalysed reaction is adenosine(37) in tRNA + dimethylallyl diphosphate = N(6)-dimethylallyladenosine(37) in tRNA + diphosphate. Its function is as follows. Catalyzes the transfer of a dimethylallyl group onto the adenine at position 37 in tRNAs that read codons beginning with uridine, leading to the formation of N6-(dimethylallyl)adenosine (i(6)A). The polypeptide is tRNA dimethylallyltransferase (Bacillus thuringiensis (strain Al Hakam)).